Reading from the N-terminus, the 306-residue chain is ClpXP adapter protein SpxH (306 aa).

The protein belongs to the SpxH family. As to quaternary structure, interacts with Spx.

It localises to the cytoplasm. Adapter protein required for efficient degradation of Spx by ClpXP under non-stress conditions. Interaction with Spx stabilizes Spx and exposes the C-terminus of Spx for recognition and proteolysis by ClpXP. This chain is ClpXP adapter protein SpxH, found in Halalkalibacterium halodurans (strain ATCC BAA-125 / DSM 18197 / FERM 7344 / JCM 9153 / C-125) (Bacillus halodurans).